A 275-amino-acid chain; its full sequence is Type III pantothenate kinase (275 aa).

ATP is bound at residue 6–13 (DAGNTNIV). 108–111 (GADR) provides a ligand contact to substrate. The active-site Proton acceptor is the aspartate 110. Aspartate 130 is a binding site for K(+). Threonine 133 serves as a coordination point for ATP. Residue threonine 187 coordinates substrate.

The protein belongs to the type III pantothenate kinase family. In terms of assembly, homodimer. It depends on NH4(+) as a cofactor. Requires K(+) as cofactor.

The protein resides in the cytoplasm. The catalysed reaction is (R)-pantothenate + ATP = (R)-4'-phosphopantothenate + ADP + H(+). The protein operates within cofactor biosynthesis; coenzyme A biosynthesis; CoA from (R)-pantothenate: step 1/5. Functionally, catalyzes the phosphorylation of pantothenate (Pan), the first step in CoA biosynthesis. The protein is Type III pantothenate kinase of Zymomonas mobilis subsp. mobilis (strain ATCC 31821 / ZM4 / CP4).